Reading from the N-terminus, the 146-residue chain is Small ribosomal subunit protein uS9 (146 aa).

It belongs to the universal ribosomal protein uS9 family. Component of the small ribosomal subunit.

Its subcellular location is the cytoplasm. Functionally, component of the small ribosomal subunit. The ribosome is a large ribonucleoprotein complex responsible for the synthesis of proteins in the cell. The protein is Small ribosomal subunit protein uS9 (rps16) of Ictalurus punctatus (Channel catfish).